Consider the following 289-residue polypeptide: Bis(5'-nucleosyl)-tetraphosphatase, symmetrical (289 aa).

It belongs to the Ap4A hydrolase family.

It carries out the reaction P(1),P(4)-bis(5'-adenosyl) tetraphosphate + H2O = 2 ADP + 2 H(+). Hydrolyzes diadenosine 5',5'''-P1,P4-tetraphosphate to yield ADP. The protein is Bis(5'-nucleosyl)-tetraphosphatase, symmetrical of Pseudomonas fluorescens (strain ATCC BAA-477 / NRRL B-23932 / Pf-5).